The following is a 291-amino-acid chain: Acetyl-coenzyme A carboxylase carboxyl transferase subunit beta (291 aa).

One can recognise a CoA carboxyltransferase N-terminal domain in the interval 29–291 (IMTKCPQCKK…TGGEREWLEN (263 aa)). The Zn(2+) site is built by C33, C36, C52, and C55. The segment at 33 to 55 (CPQCKKIMLTKELDKNLRVCMNC) adopts a C4-type zinc-finger fold.

It belongs to the AccD/PCCB family. Acetyl-CoA carboxylase is a heterohexamer composed of biotin carboxyl carrier protein (AccB), biotin carboxylase (AccC) and two subunits each of ACCase subunit alpha (AccA) and ACCase subunit beta (AccD). Requires Zn(2+) as cofactor.

It is found in the cytoplasm. It catalyses the reaction N(6)-carboxybiotinyl-L-lysyl-[protein] + acetyl-CoA = N(6)-biotinyl-L-lysyl-[protein] + malonyl-CoA. It participates in lipid metabolism; malonyl-CoA biosynthesis; malonyl-CoA from acetyl-CoA: step 1/1. Its function is as follows. Component of the acetyl coenzyme A carboxylase (ACC) complex. Biotin carboxylase (BC) catalyzes the carboxylation of biotin on its carrier protein (BCCP) and then the CO(2) group is transferred by the transcarboxylase to acetyl-CoA to form malonyl-CoA. This chain is Acetyl-coenzyme A carboxylase carboxyl transferase subunit beta, found in Bacillus pumilus (strain SAFR-032).